The primary structure comprises 462 residues: ATP synthase subunit beta 1 (462 aa).

151 to 158 (GGAGVGKT) is an ATP binding site.

It belongs to the ATPase alpha/beta chains family. F-type ATPases have 2 components, CF(1) - the catalytic core - and CF(0) - the membrane proton channel. CF(1) has five subunits: alpha(3), beta(3), gamma(1), delta(1), epsilon(1). CF(0) has four main subunits: a(1), b(1), b'(1) and c(9-12).

The protein localises to the cell inner membrane. It carries out the reaction ATP + H2O + 4 H(+)(in) = ADP + phosphate + 5 H(+)(out). Functionally, produces ATP from ADP in the presence of a proton gradient across the membrane. The catalytic sites are hosted primarily by the beta subunits. This is ATP synthase subunit beta 1 from Chlorobium luteolum (strain DSM 273 / BCRC 81028 / 2530) (Pelodictyon luteolum).